Consider the following 302-residue polypeptide: Vacuolar protein sorting-associated protein 26A (302 aa).

This sequence belongs to the VPS26 family. Component of the retromer complex which consists of VPS29 (MAG1), VPS26 (VPS26A or VPS26B), VPS35 (VPS35A or VPS35B or VPS35C), VPS5/17 (SNX1 or SNX2A or SNX2B). Component of a retromer subcomplex consisting of VPS29 (MAG1), VPS26 (VPS26A or VPS26B), VPS35 (VPS35A or VPS35B or VPS35C).

The protein resides in the cytoplasm. It is found in the endosome membrane. The protein localises to the prevacuolar compartment membrane. It localises to the golgi apparatus. Its subcellular location is the trans-Golgi network membrane. Its function is as follows. Plays a role in vesicular protein sorting. Component of the membrane-associated retromer complex which is essential in endosome-to-Golgi retrograde transport. The VPS29-VPS26-VPS35 subcomplex may be involved in recycling of specific cargos from endosome to the plasma membrane. This Arabidopsis thaliana (Mouse-ear cress) protein is Vacuolar protein sorting-associated protein 26A (VPS26A).